Here is a 180-residue protein sequence, read N- to C-terminus: Acireductone dioxygenase (180 aa).

Fe(2+)-binding residues include His97, His99, Glu103, and His141. His97, His99, Glu103, and His141 together coordinate Ni(2+).

Belongs to the acireductone dioxygenase (ARD) family. In terms of assembly, monomer. Fe(2+) is required as a cofactor. The cofactor is Ni(2+).

It catalyses the reaction 1,2-dihydroxy-5-(methylsulfanyl)pent-1-en-3-one + O2 = 3-(methylsulfanyl)propanoate + CO + formate + 2 H(+). The catalysed reaction is 1,2-dihydroxy-5-(methylsulfanyl)pent-1-en-3-one + O2 = 4-methylsulfanyl-2-oxobutanoate + formate + 2 H(+). Its pathway is amino-acid biosynthesis; L-methionine biosynthesis via salvage pathway; L-methionine from S-methyl-5-thio-alpha-D-ribose 1-phosphate: step 5/6. Its function is as follows. Catalyzes 2 different reactions between oxygen and the acireductone 1,2-dihydroxy-3-keto-5-methylthiopentene (DHK-MTPene) depending upon the metal bound in the active site. Fe-containing acireductone dioxygenase (Fe-ARD) produces formate and 2-keto-4-methylthiobutyrate (KMTB), the alpha-ketoacid precursor of methionine in the methionine recycle pathway. Ni-containing acireductone dioxygenase (Ni-ARD) produces methylthiopropionate, carbon monoxide and formate, and does not lie on the methionine recycle pathway. This Citrobacter koseri (strain ATCC BAA-895 / CDC 4225-83 / SGSC4696) protein is Acireductone dioxygenase.